Here is a 286-residue protein sequence, read N- to C-terminus: Large ribosomal subunit protein uL2 (286 aa).

Disordered stretches follow at residues 22–59 and 215–286; these read KELT…GGGH and LGRR…KLHK. Residues 230-240 are compositionally biased toward basic and acidic residues; sequence DHPHGGGEGRT. The span at 255-286 shows a compositional bias: basic residues; that stretch reads KGGRTRQKRKPSNSSIVRRRKSRRYGQLKLHK.

The protein belongs to the universal ribosomal protein uL2 family. In terms of assembly, part of the 50S ribosomal subunit. Forms a bridge to the 30S subunit in the 70S ribosome.

Functionally, one of the primary rRNA binding proteins. Required for association of the 30S and 50S subunits to form the 70S ribosome, for tRNA binding and peptide bond formation. It has been suggested to have peptidyltransferase activity; this is somewhat controversial. Makes several contacts with the 16S rRNA in the 70S ribosome. The protein is Large ribosomal subunit protein uL2 of Rhodopirellula baltica (strain DSM 10527 / NCIMB 13988 / SH1).